A 101-amino-acid polypeptide reads, in one-letter code: ATP synthase subunit c (101 aa).

The next 2 helical transmembrane spans lie at 31 to 51 (AFAYLGAGLAMIGVIGVGAGQ) and 81 to 101 (AISETSSIYALLVALILIFVG).

It belongs to the ATPase C chain family. F-type ATPases have 2 components, F(1) - the catalytic core - and F(0) - the membrane proton channel. F(1) has five subunits: alpha(3), beta(3), gamma(1), delta(1), epsilon(1). F(0) has three main subunits: a(1), b(2) and c(10-14). The alpha and beta chains form an alternating ring which encloses part of the gamma chain. F(1) is attached to F(0) by a central stalk formed by the gamma and epsilon chains, while a peripheral stalk is formed by the delta and b chains.

Its subcellular location is the cell membrane. Functionally, f(1)F(0) ATP synthase produces ATP from ADP in the presence of a proton or sodium gradient. F-type ATPases consist of two structural domains, F(1) containing the extramembraneous catalytic core and F(0) containing the membrane proton channel, linked together by a central stalk and a peripheral stalk. During catalysis, ATP synthesis in the catalytic domain of F(1) is coupled via a rotary mechanism of the central stalk subunits to proton translocation. Key component of the F(0) channel; it plays a direct role in translocation across the membrane. A homomeric c-ring of between 10-14 subunits forms the central stalk rotor element with the F(1) delta and epsilon subunits. The sequence is that of ATP synthase subunit c from Mesomycoplasma hyopneumoniae (strain 232) (Mycoplasma hyopneumoniae).